A 92-amino-acid polypeptide reads, in one-letter code: Small ribosomal subunit protein bS20 (92 aa).

Residues 1-24 (MANSAQARKRARQAAKANSHNSAL) are disordered.

The protein belongs to the bacterial ribosomal protein bS20 family.

In terms of biological role, binds directly to 16S ribosomal RNA. This is Small ribosomal subunit protein bS20 from Paraburkholderia xenovorans (strain LB400).